An 83-amino-acid polypeptide reads, in one-letter code: MKGIILLISCLMLIEVVVGGKEGYPLDSSGCKAGCFFGTNSWCNTECKRKSAAKGYCAWPSCYCYEFTDDSKIWNAKTNKCYK.

The N-terminal stretch at 1–19 (MKGIILLISCLMLIEVVVG) is a signal peptide. In terms of domain architecture, LCN-type CS-alpha/beta spans 21–82 (KEGYPLDSSG…IWNAKTNKCY (62 aa)). 4 disulfides stabilise this stretch: C31/C81, C35/C57, C43/C62, and C47/C64.

This sequence belongs to the long (4 C-C) scorpion toxin superfamily. Sodium channel inhibitor family. Beta subfamily. In terms of tissue distribution, expressed by the venom gland.

It localises to the secreted. Beta toxins bind voltage-independently at site-4 of sodium channels (Nav) and shift the voltage of activation toward more negative potentials thereby affecting sodium channel activation and promoting spontaneous and repetitive firing. This chain is Toxin To15, found in Tityus obscurus (Amazonian scorpion).